The following is a 497-amino-acid chain: MLDLGNMSMSASVALTCCPSFLPAASGPELAKSINSPENLAGECNGKHLPMIPPEEEVKDIKIANGVTAFTRKQNPSDRVKKGFVLDDHVKDWVKRRVASGVSESTCFLPFLVGAKKMVDCLVCHKPVYPGEDLSCSVRGCQGAYHSLCAKESLGFSKSSKFKCPQHECFVCKQRTQWRCVKCPMAAHDKHSPWSKEILHLKDQPGRAVCWRHPTDWRLDTKHAVAQSEIEEVFCQLPLPYVEEEFKIDLAWKDSVVKEDPPSYVHIRRNIYLVKKKRDNANDGVGCTNCGPNCDRSCVCRVQCISCSKGCSCPESCGNRPFRKEKKIKIVKTEHCGWGVEAAESINKEDFIVEYIGEVISDAQCEQRLWDMKHKGMKDFYMCEIQKDFTIDATFKGNASRFLNHSCNPNCVLEKWQVEGETRVGVFAARQIEAGEPLTYDYRFVQFGPEVKCNCGSENCQGYLGTKRKEPNCLVVSWGAKRRRLFHRPIARKPQQD.

The PHD-type zinc-finger motif lies at 118–186; sequence MVDCLVCHKP…QWRCVKCPMA (69 aa). One can recognise an AWS domain in the interval 283–326; the sequence is DGVGCTNCGPNCDRSCVCRVQCISCSKGCSCPESCGNRPFRKEK. The 118-residue stretch at 326–443 folds into the SET domain; sequence KKIKIVKTEH…AGEPLTYDYR (118 aa). A Post-SET domain is found at 449-465; that stretch reads PEVKCNCGSENCQGYLG.

Belongs to the class V-like SAM-binding methyltransferase superfamily. Histone-lysine methyltransferase family. SET2 subfamily. In terms of assembly, interacts with AMS/bHLH21 by its SET domain and PHD finger. Expressed in roots, flowers and buds, the anther and in stamen filaments.

Its subcellular location is the nucleus. The protein resides in the chromosome. It catalyses the reaction L-lysyl-[histone] + S-adenosyl-L-methionine = N(6)-methyl-L-lysyl-[histone] + S-adenosyl-L-homocysteine + H(+). Its function is as follows. Histone methyltransferase. Involved in stamen development. The chain is Histone-lysine N-methyltransferase ASHR3 (ASHR3) from Arabidopsis thaliana (Mouse-ear cress).